The primary structure comprises 337 residues: D-alanine--D-alanine ligase (337 aa).

One can recognise an ATP-grasp domain in the interval 124 to 330 (KMWFSALGIP…FTEYLSLVIN (207 aa)). 154–209 (ALAQWGSIFVKAASQGSSVGCYKVDDSAKVAGVLKDAFGYAPYVIVEKTIKARELE) is an ATP binding site. Residues aspartate 284, glutamate 297, and asparagine 299 each contribute to the Mg(2+) site.

This sequence belongs to the D-alanine--D-alanine ligase family. The cofactor is Mg(2+). It depends on Mn(2+) as a cofactor.

It localises to the cytoplasm. The enzyme catalyses 2 D-alanine + ATP = D-alanyl-D-alanine + ADP + phosphate + H(+). Its pathway is cell wall biogenesis; peptidoglycan biosynthesis. In terms of biological role, cell wall formation. The protein is D-alanine--D-alanine ligase of Shewanella baltica (strain OS185).